Consider the following 200-residue polypeptide: Small ribosomal subunit protein uS5 (200 aa).

Over residues 1–12 (MGRPRTSQTRGQ) the composition is skewed to polar residues. Positions 1–49 (MGRPRTSQTRGQGPSGATGGNPRGGGSTTRERDARGARPGERDGGSEIQ) are disordered. The segment covering 13–27 (GPSGATGGNPRGGGS) has biased composition (gly residues). Over residues 29-49 (TRERDARGARPGERDGGSEIQ) the composition is skewed to basic and acidic residues. An S5 DRBM domain is found at 48 to 111 (IQDRVVQIRR…EKARHAMFDV (64 aa)).

This sequence belongs to the universal ribosomal protein uS5 family. In terms of assembly, part of the 30S ribosomal subunit. Contacts proteins S4 and S8.

In terms of biological role, with S4 and S12 plays an important role in translational accuracy. Located at the back of the 30S subunit body where it stabilizes the conformation of the head with respect to the body. The sequence is that of Small ribosomal subunit protein uS5 from Rubrobacter xylanophilus (strain DSM 9941 / JCM 11954 / NBRC 16129 / PRD-1).